The chain runs to 265 residues: 3-methyl-2-oxobutanoate hydroxymethyltransferase (265 aa).

Mg(2+) is bound by residues D41 and D80. 3-methyl-2-oxobutanoate is bound by residues D41 to S42, D80, and K110. Mg(2+) is bound at residue E112. Catalysis depends on E179, which acts as the Proton acceptor.

This sequence belongs to the PanB family. In terms of assembly, homodecamer; pentamer of dimers. Mg(2+) serves as cofactor.

The protein localises to the cytoplasm. It catalyses the reaction 3-methyl-2-oxobutanoate + (6R)-5,10-methylene-5,6,7,8-tetrahydrofolate + H2O = 2-dehydropantoate + (6S)-5,6,7,8-tetrahydrofolate. It participates in cofactor biosynthesis; (R)-pantothenate biosynthesis; (R)-pantoate from 3-methyl-2-oxobutanoate: step 1/2. Functionally, catalyzes the reversible reaction in which hydroxymethyl group from 5,10-methylenetetrahydrofolate is transferred onto alpha-ketoisovalerate to form ketopantoate. In Pseudothermotoga lettingae (strain ATCC BAA-301 / DSM 14385 / NBRC 107922 / TMO) (Thermotoga lettingae), this protein is 3-methyl-2-oxobutanoate hydroxymethyltransferase.